The sequence spans 284 residues: Tryptophan 2,3-dioxygenase (284 aa).

Substrate-binding positions include 53 to 57 and R119; that span reads FIIQH. H242 lines the heme pocket. T256 provides a ligand contact to substrate.

This sequence belongs to the tryptophan 2,3-dioxygenase family. In terms of assembly, homotetramer. Heme is required as a cofactor.

The catalysed reaction is L-tryptophan + O2 = N-formyl-L-kynurenine. Its pathway is amino-acid degradation; L-tryptophan degradation via kynurenine pathway; L-kynurenine from L-tryptophan: step 1/2. It participates in siderophore biosynthesis; quinolobactin biosynthesis. In terms of biological role, heme-dependent dioxygenase that catalyzes the oxidative cleavage of the L-tryptophan (L-Trp) pyrrole ring and converts L-tryptophan to N-formyl-L-kynurenine. Catalyzes the oxidative cleavage of the indole moiety. Required for synthesis of the siderophore quinolobactin. The protein is Tryptophan 2,3-dioxygenase of Pseudomonas fluorescens.